We begin with the raw amino-acid sequence, 1071 residues long: Kinesin-like protein KIN-14J (1071 aa).

The Calponin-homology (CH) domain occupies 39–142 (KKGHQSLVEW…SLKALKASFS (104 aa)). The segment at 157–181 (WSLPEDHSDSRGDDRNFTDGFQSKE) is disordered. Residues 158-173 (SLPEDHSDSRGDDRNF) show a composition bias toward basic and acidic residues. Positions 299 to 389 (EKTRIEEKER…ELEKLCQSKS (91 aa)) form a coiled coil. Residues 472-800 (NIRVYCRIRP…LKFAERVSGV (329 aa)) form the Kinesin motor domain. 556 to 563 (GQTGSGKT) contributes to the ATP binding site. The stretch at 811–844 (GRDVRQLMEQVSNLKDVIAKKDEELQNFQKVKGN) forms a coiled coil. Disordered stretches follow at residues 852-931 (GLSN…AAKG) and 995-1071 (ARMT…NRRR). 2 stretches are compositionally biased toward basic and acidic residues: residues 910 to 921 (SDERKHQKDYHQ) and 995 to 1017 (ARMT…KDRT). The span at 1034-1049 (TRPSRLSIATSSSSKA) shows a compositional bias: polar residues.

Belongs to the TRAFAC class myosin-kinesin ATPase superfamily. Kinesin family. KIN-14 subfamily.

This chain is Kinesin-like protein KIN-14J, found in Arabidopsis thaliana (Mouse-ear cress).